Here is a 160-residue protein sequence, read N- to C-terminus: Cytochrome b6-f complex subunit 4 (160 aa).

3 helical membrane-spanning segments follow: residues 36–56, 95–115, and 127–147; these read LLYT…GLAL, LLGV…PFIE, and PIAT…GIGA.

It belongs to the cytochrome b family. PetD subfamily. The 4 large subunits of the cytochrome b6-f complex are cytochrome b6, subunit IV (17 kDa polypeptide, petD), cytochrome f and the Rieske protein, while the 4 small subunits are petG, petL, petM and petN. The complex functions as a dimer.

It localises to the plastid. The protein resides in the chloroplast thylakoid membrane. Component of the cytochrome b6-f complex, which mediates electron transfer between photosystem II (PSII) and photosystem I (PSI), cyclic electron flow around PSI, and state transitions. The protein is Cytochrome b6-f complex subunit 4 of Cyanidioschyzon merolae (strain NIES-3377 / 10D) (Unicellular red alga).